Reading from the N-terminus, the 474-residue chain is tRNA modification GTPase MnmE (474 aa).

(6S)-5-formyl-5,6,7,8-tetrahydrofolate is bound by residues Arg25, Glu82, and Lys123. Residues 219–386 (GIKVVIAGKP…LKKHLYDSAM (168 aa)) enclose the TrmE-type G domain. Asn229 is a K(+) binding site. GTP-binding positions include 229–234 (NAGKSS), 248–254 (SNISGTT), and 273–276 (DTAG). Position 233 (Ser233) interacts with Mg(2+). Ser248, Ile250, and Thr253 together coordinate K(+). A Mg(2+)-binding site is contributed by Thr254. Residue Lys474 coordinates (6S)-5-formyl-5,6,7,8-tetrahydrofolate.

The protein belongs to the TRAFAC class TrmE-Era-EngA-EngB-Septin-like GTPase superfamily. TrmE GTPase family. As to quaternary structure, homodimer. Heterotetramer of two MnmE and two MnmG subunits. The cofactor is K(+).

Its subcellular location is the cytoplasm. Its function is as follows. Exhibits a very high intrinsic GTPase hydrolysis rate. Involved in the addition of a carboxymethylaminomethyl (cmnm) group at the wobble position (U34) of certain tRNAs, forming tRNA-cmnm(5)s(2)U34. This is tRNA modification GTPase MnmE from Blochmanniella floridana.